A 234-amino-acid polypeptide reads, in one-letter code: UPF0502 protein Reut_B4455 (234 aa).

The protein belongs to the UPF0502 family.

This Cupriavidus pinatubonensis (strain JMP 134 / LMG 1197) (Cupriavidus necator (strain JMP 134)) protein is UPF0502 protein Reut_B4455.